Here is a 457-residue protein sequence, read N- to C-terminus: MADS-box transcription factor 1 (457 aa).

Residues 11–71 enclose the MADS-box domain; sequence PSSPRRSIQR…NACHVYSSEE (61 aa). Disordered stretches follow at residues 195–278 and 295–328; these read SGDY…SRLH and SSGYLDPSSTPITPLDSAINQITPPFLPDNLGQE. A compositionally biased stretch (low complexity) spans 199–216; it reads SDSPLEPSSSSSFSVPPE. Residues 218-234 are compositionally biased toward polar residues; sequence LNPTLSFQHNDVPQTDN. The span at 265 to 278 shows a compositional bias: basic residues; the sequence is KNRRNGKPRISRLH. Residues 295-317 show a composition bias toward polar residues; sequence SSGYLDPSSTPITPLDSAINQIT. Serine 372 is modified (phosphoserine).

Post-translationally, phosphorylated. Occurs periodically during mitosis.

It localises to the nucleus. In terms of biological role, acts as a transcriptional activator with a role in the regulation of mitosis. Regulates septation and the periodic transcription of cdc15. The polypeptide is MADS-box transcription factor 1 (mbx1) (Schizosaccharomyces pombe (strain 972 / ATCC 24843) (Fission yeast)).